Here is a 459-residue protein sequence, read N- to C-terminus: ATP synthase subunit beta (459 aa).

147 to 154 (GGAGVGKT) contacts ATP.

The protein belongs to the ATPase alpha/beta chains family. As to quaternary structure, F-type ATPases have 2 components, CF(1) - the catalytic core - and CF(0) - the membrane proton channel. CF(1) has five subunits: alpha(3), beta(3), gamma(1), delta(1), epsilon(1). CF(0) has three main subunits: a(1), b(2) and c(9-12). The alpha and beta chains form an alternating ring which encloses part of the gamma chain. CF(1) is attached to CF(0) by a central stalk formed by the gamma and epsilon chains, while a peripheral stalk is formed by the delta and b chains.

The protein resides in the cell inner membrane. It carries out the reaction ATP + H2O + 4 H(+)(in) = ADP + phosphate + 5 H(+)(out). Produces ATP from ADP in the presence of a proton gradient across the membrane. The catalytic sites are hosted primarily by the beta subunits. This chain is ATP synthase subunit beta, found in Hydrogenovibrio crunogenus (strain DSM 25203 / XCL-2) (Thiomicrospira crunogena).